Consider the following 227-residue polypeptide: ATP synthase F(0) complex subunit a (227 aa).

The next 6 membrane-spanning stretches (helical) occupy residues proline 12–proline 32, tryptophan 69–leucine 89, glutamine 98–methionine 118, glutamate 132–isoleucine 152, phenylalanine 180–leucine 200, and leucine 202–tyrosine 222.

This sequence belongs to the ATPase A chain family. As to quaternary structure, component of the ATP synthase complex composed at least of ATP5F1A/subunit alpha, ATP5F1B/subunit beta, ATP5MC1/subunit c (homooctomer), MT-ATP6/subunit a, MT-ATP8/subunit 8, ATP5ME/subunit e, ATP5MF/subunit f, ATP5MG/subunit g, ATP5MK/subunit k, ATP5MJ/subunit j, ATP5F1C/subunit gamma, ATP5F1D/subunit delta, ATP5F1E/subunit epsilon, ATP5PF/subunit F6, ATP5PB/subunit b, ATP5PD/subunit d, ATP5PO/subunit OSCP. ATP synthase complex consists of a soluble F(1) head domain (subunits alpha(3) and beta(3)) - the catalytic core - and a membrane F(0) domain - the membrane proton channel (subunits c, a, 8, e, f, g, k and j). These two domains are linked by a central stalk (subunits gamma, delta, and epsilon) rotating inside the F1 region and a stationary peripheral stalk (subunits F6, b, d, and OSCP). Interacts with DNAJC30; interaction is direct.

It is found in the mitochondrion inner membrane. The enzyme catalyses H(+)(in) = H(+)(out). Subunit a, of the mitochondrial membrane ATP synthase complex (F(1)F(0) ATP synthase or Complex V) that produces ATP from ADP in the presence of a proton gradient across the membrane which is generated by electron transport complexes of the respiratory chain. ATP synthase complex consist of a soluble F(1) head domain - the catalytic core - and a membrane F(1) domain - the membrane proton channel. These two domains are linked by a central stalk rotating inside the F(1) region and a stationary peripheral stalk. During catalysis, ATP synthesis in the catalytic domain of F(1) is coupled via a rotary mechanism of the central stalk subunits to proton translocation. With the subunit c (ATP5MC1), forms the proton-conducting channel in the F(0) domain, that contains two crucial half-channels (inlet and outlet) that facilitate proton movement from the mitochondrial intermembrane space (IMS) into the matrix. Protons are taken up via the inlet half-channel and released through the outlet half-channel, following a Grotthuss mechanism. This Salmo salar (Atlantic salmon) protein is ATP synthase F(0) complex subunit a.